The sequence spans 554 residues: Carboxypeptidase Y homolog A (554 aa).

An N-terminal signal peptide occupies residues 1-17 (MRISASTVLLGAASAAS). The propeptide occupies 18-137 (AASFQNQAQH…QLDNFNLRVK (120 aa)). Disulfide bonds link Cys191/Cys431, Cys325/Cys339, Cys349/Cys372, Cys356/Cys365, and Cys394/Cys401. Asn222 carries N-linked (GlcNAc...) asparagine glycosylation. The active site involves Ser278. Asp470 is a catalytic residue. N-linked (GlcNAc...) asparagine glycosylation occurs at Asn518. His529 is a catalytic residue.

It belongs to the peptidase S10 family.

The protein localises to the vacuole. The enzyme catalyses Release of a C-terminal amino acid with broad specificity.. Vacuolar carboxypeptidase involved in degradation of small peptides. Digests preferentially peptides containing an aliphatic or hydrophobic residue in P1' position, as well as methionine, leucine or phenylalanine in P1 position of ester substrate. The chain is Carboxypeptidase Y homolog A (cpyA) from Neurospora crassa (strain ATCC 24698 / 74-OR23-1A / CBS 708.71 / DSM 1257 / FGSC 987).